A 324-amino-acid polypeptide reads, in one-letter code: Acetyl-coenzyme A carboxylase carboxyl transferase subunit alpha (324 aa).

Residues 37–291 (ILEDKLENLE…NVVLQKTFEQ (255 aa)) form the CoA carboxyltransferase C-terminal domain.

This sequence belongs to the AccA family. In terms of assembly, acetyl-CoA carboxylase is a heterohexamer composed of biotin carboxyl carrier protein (AccB), biotin carboxylase (AccC) and two subunits each of ACCase subunit alpha (AccA) and ACCase subunit beta (AccD).

It localises to the cytoplasm. The catalysed reaction is N(6)-carboxybiotinyl-L-lysyl-[protein] + acetyl-CoA = N(6)-biotinyl-L-lysyl-[protein] + malonyl-CoA. It participates in lipid metabolism; malonyl-CoA biosynthesis; malonyl-CoA from acetyl-CoA: step 1/1. In terms of biological role, component of the acetyl coenzyme A carboxylase (ACC) complex. First, biotin carboxylase catalyzes the carboxylation of biotin on its carrier protein (BCCP) and then the CO(2) group is transferred by the carboxyltransferase to acetyl-CoA to form malonyl-CoA. The protein is Acetyl-coenzyme A carboxylase carboxyl transferase subunit alpha of Bacillus cytotoxicus (strain DSM 22905 / CIP 110041 / 391-98 / NVH 391-98).